A 227-amino-acid polypeptide reads, in one-letter code: Cytochrome c oxidase subunit 2 (227 aa).

The Mitochondrial intermembrane segment spans residues 1–14 (MAYPFQLGLQDATS). Residues 15 to 45 (PIMEELLHFHDHTLMIVFLISSLVLYIITLM) traverse the membrane as a helical segment. The Mitochondrial matrix portion of the chain corresponds to 46–59 (LTTKLTHTSTMDAQ). A helical membrane pass occupies residues 60–87 (EVETVWTILPAIILILIALPSLRILYMM). The Mitochondrial intermembrane segment spans residues 88 to 227 (DEINNPSLTV…YFETWSAVMV (140 aa)). H161, C196, E198, C200, H204, and M207 together coordinate Cu cation. E198 contributes to the Mg(2+) binding site. At Y218 the chain carries Phosphotyrosine.

Belongs to the cytochrome c oxidase subunit 2 family. In terms of assembly, component of the cytochrome c oxidase (complex IV, CIV), a multisubunit enzyme composed of 14 subunits. The complex is composed of a catalytic core of 3 subunits MT-CO1, MT-CO2 and MT-CO3, encoded in the mitochondrial DNA, and 11 supernumerary subunits COX4I, COX5A, COX5B, COX6A, COX6B, COX6C, COX7A, COX7B, COX7C, COX8 and NDUFA4, which are encoded in the nuclear genome. The complex exists as a monomer or a dimer and forms supercomplexes (SCs) in the inner mitochondrial membrane with NADH-ubiquinone oxidoreductase (complex I, CI) and ubiquinol-cytochrome c oxidoreductase (cytochrome b-c1 complex, complex III, CIII), resulting in different assemblies (supercomplex SCI(1)III(2)IV(1) and megacomplex MCI(2)III(2)IV(2)). Found in a complex with TMEM177, COA6, COX18, COX20, SCO1 and SCO2. Interacts with TMEM177 in a COX20-dependent manner. Interacts with COX20. Interacts with COX16. Cu cation is required as a cofactor.

It localises to the mitochondrion inner membrane. The enzyme catalyses 4 Fe(II)-[cytochrome c] + O2 + 8 H(+)(in) = 4 Fe(III)-[cytochrome c] + 2 H2O + 4 H(+)(out). Component of the cytochrome c oxidase, the last enzyme in the mitochondrial electron transport chain which drives oxidative phosphorylation. The respiratory chain contains 3 multisubunit complexes succinate dehydrogenase (complex II, CII), ubiquinol-cytochrome c oxidoreductase (cytochrome b-c1 complex, complex III, CIII) and cytochrome c oxidase (complex IV, CIV), that cooperate to transfer electrons derived from NADH and succinate to molecular oxygen, creating an electrochemical gradient over the inner membrane that drives transmembrane transport and the ATP synthase. Cytochrome c oxidase is the component of the respiratory chain that catalyzes the reduction of oxygen to water. Electrons originating from reduced cytochrome c in the intermembrane space (IMS) are transferred via the dinuclear copper A center (CU(A)) of subunit 2 and heme A of subunit 1 to the active site in subunit 1, a binuclear center (BNC) formed by heme A3 and copper B (CU(B)). The BNC reduces molecular oxygen to 2 water molecules using 4 electrons from cytochrome c in the IMS and 4 protons from the mitochondrial matrix. This chain is Cytochrome c oxidase subunit 2 (MT-CO2), found in Vulpes vulpes (Red fox).